The chain runs to 430 residues: Adenylosuccinate synthetase (430 aa).

Residues 12-18 and 40-42 each bind GTP; these read GDEGKGK and GHT. The Proton acceptor role is filled by Asp13. Mg(2+) is bound by residues Asp13 and Gly40. IMP contacts are provided by residues 13 to 16, 38 to 41, Thr128, Arg142, Gln223, Thr238, and Arg302; these read DEGK and NAGH. The active-site Proton donor is the His41. 298–304 lines the substrate pocket; it reads TTTGRPR. GTP is bound by residues Arg304, 330–332, and 412–414; these read SID and SVG.

Belongs to the adenylosuccinate synthetase family. In terms of assembly, homodimer. The cofactor is Mg(2+).

It is found in the cytoplasm. It catalyses the reaction IMP + L-aspartate + GTP = N(6)-(1,2-dicarboxyethyl)-AMP + GDP + phosphate + 2 H(+). It participates in purine metabolism; AMP biosynthesis via de novo pathway; AMP from IMP: step 1/2. In terms of biological role, plays an important role in the de novo pathway of purine nucleotide biosynthesis. Catalyzes the first committed step in the biosynthesis of AMP from IMP. The sequence is that of Adenylosuccinate synthetase from Streptococcus pyogenes serotype M5 (strain Manfredo).